Here is a 374-residue protein sequence, read N- to C-terminus: Glutamate 5-kinase (374 aa).

Lys13 is an ATP binding site. 3 residues coordinate substrate: Ser54, Asp141, and Asn153. 173–174 (SD) is an ATP binding site. Positions 278 to 355 (KGTVHLDSGA…NEIESVLGYP (78 aa)) constitute a PUA domain.

It belongs to the glutamate 5-kinase family.

Its subcellular location is the cytoplasm. The enzyme catalyses L-glutamate + ATP = L-glutamyl 5-phosphate + ADP. The protein operates within amino-acid biosynthesis; L-proline biosynthesis; L-glutamate 5-semialdehyde from L-glutamate: step 1/2. Functionally, catalyzes the transfer of a phosphate group to glutamate to form L-glutamate 5-phosphate. The polypeptide is Glutamate 5-kinase (Roseobacter denitrificans (strain ATCC 33942 / OCh 114) (Erythrobacter sp. (strain OCh 114))).